A 75-amino-acid chain; its full sequence is Vacuolar ATPase assembly integral membrane protein VMA21 (75 aa).

Residues 1 to 8 (MPVDVAPG) are Cytoplasmic-facing. A helical membrane pass occupies residues 9–29 (VIKKLMFFTAAMVICPLLTFF). At 30–41 (SIKQFTTNTIVS) the chain is on the lumenal side. The chain crosses the membrane as a helical span at residues 42–62 (GGLAALAANLVLIGYIVVAFM). Residues 63-75 (EDTTDVKAESKKD) lie on the Cytoplasmic side of the membrane.

This sequence belongs to the VMA21 family.

Its subcellular location is the endoplasmic reticulum membrane. It is found in the endoplasmic reticulum-Golgi intermediate compartment membrane. The protein resides in the cytoplasmic vesicle. It localises to the COPII-coated vesicle membrane. In terms of biological role, required for the assembly of the V0 complex of the vacuolar ATPase (V-ATPase) in the endoplasmic reticulum. This chain is Vacuolar ATPase assembly integral membrane protein VMA21, found in Vanderwaltozyma polyspora (strain ATCC 22028 / DSM 70294 / BCRC 21397 / CBS 2163 / NBRC 10782 / NRRL Y-8283 / UCD 57-17) (Kluyveromyces polysporus).